We begin with the raw amino-acid sequence, 312 residues long: DNA-directed RNA polymerase subunit alpha (312 aa).

Residues Met1–Thr226 are alpha N-terminal domain (alpha-NTD). An alpha C-terminal domain (alpha-CTD) region spans residues Asp243–Lys312.

The protein belongs to the RNA polymerase alpha chain family. In terms of assembly, homodimer. The RNAP catalytic core consists of 2 alpha, 1 beta, 1 beta' and 1 omega subunit. When a sigma factor is associated with the core the holoenzyme is formed, which can initiate transcription.

The enzyme catalyses RNA(n) + a ribonucleoside 5'-triphosphate = RNA(n+1) + diphosphate. Its function is as follows. DNA-dependent RNA polymerase catalyzes the transcription of DNA into RNA using the four ribonucleoside triphosphates as substrates. The chain is DNA-directed RNA polymerase subunit alpha from Streptococcus pyogenes serotype M1.